A 420-amino-acid polypeptide reads, in one-letter code: Serine hydroxymethyltransferase (420 aa).

(6S)-5,6,7,8-tetrahydrofolate contacts are provided by residues Leu-121 and 125–127; that span reads GHL. Lys-229 carries the N6-(pyridoxal phosphate)lysine modification.

It belongs to the SHMT family. As to quaternary structure, homodimer. The cofactor is pyridoxal 5'-phosphate.

Its subcellular location is the cytoplasm. It catalyses the reaction (6R)-5,10-methylene-5,6,7,8-tetrahydrofolate + glycine + H2O = (6S)-5,6,7,8-tetrahydrofolate + L-serine. It participates in one-carbon metabolism; tetrahydrofolate interconversion. It functions in the pathway amino-acid biosynthesis; glycine biosynthesis; glycine from L-serine: step 1/1. Functionally, catalyzes the reversible interconversion of serine and glycine with tetrahydrofolate (THF) serving as the one-carbon carrier. This reaction serves as the major source of one-carbon groups required for the biosynthesis of purines, thymidylate, methionine, and other important biomolecules. Also exhibits THF-independent aldolase activity toward beta-hydroxyamino acids, producing glycine and aldehydes, via a retro-aldol mechanism. This is Serine hydroxymethyltransferase from Pasteurella multocida (strain Pm70).